A 525-amino-acid polypeptide reads, in one-letter code: FNIP repeat-containing protein DDB_G0274617 (525 aa).

An FNIP repeat occupies 65-107 (YQHEIKKEMLPSSIISIIFYNIKNILSSDSIPDTVKFLGFNGY).

The polypeptide is FNIP repeat-containing protein DDB_G0274617 (Dictyostelium discoideum (Social amoeba)).